The primary structure comprises 448 residues: 3-phosphoshikimate 1-carboxyvinyltransferase (448 aa).

3-phosphoshikimate is bound by residues lysine 38, serine 39, and arginine 43. Residue lysine 38 participates in phosphoenolpyruvate binding. Positions 111 and 140 each coordinate phosphoenolpyruvate. Serine 185, glutamine 187, aspartate 335, and lysine 362 together coordinate 3-phosphoshikimate. Glutamine 187 contacts phosphoenolpyruvate. The active-site Proton acceptor is aspartate 335. Phosphoenolpyruvate contacts are provided by arginine 366 and arginine 408.

This sequence belongs to the EPSP synthase family. As to quaternary structure, monomer.

Its subcellular location is the cytoplasm. The catalysed reaction is 3-phosphoshikimate + phosphoenolpyruvate = 5-O-(1-carboxyvinyl)-3-phosphoshikimate + phosphate. The protein operates within metabolic intermediate biosynthesis; chorismate biosynthesis; chorismate from D-erythrose 4-phosphate and phosphoenolpyruvate: step 6/7. Its function is as follows. Catalyzes the transfer of the enolpyruvyl moiety of phosphoenolpyruvate (PEP) to the 5-hydroxyl of shikimate-3-phosphate (S3P) to produce enolpyruvyl shikimate-3-phosphate and inorganic phosphate. This chain is 3-phosphoshikimate 1-carboxyvinyltransferase, found in Gloeothece citriformis (strain PCC 7424) (Cyanothece sp. (strain PCC 7424)).